Reading from the N-terminus, the 211-residue chain is Ribosomal RNA small subunit methyltransferase G (211 aa).

S-adenosyl-L-methionine-binding positions include Gly-74, Leu-79, 125–126, and Arg-140; that span reads AE.

This sequence belongs to the methyltransferase superfamily. RNA methyltransferase RsmG family.

The protein resides in the cytoplasm. In terms of biological role, specifically methylates the N7 position of guanine in position 518 of 16S rRNA. The protein is Ribosomal RNA small subunit methyltransferase G of Clavibacter sepedonicus (Clavibacter michiganensis subsp. sepedonicus).